A 331-amino-acid polypeptide reads, in one-letter code: Ferredoxin--NADP reductase (331 aa).

FAD-binding residues include glutamate 34, glutamine 42, tyrosine 47, valine 87, phenylalanine 121, aspartate 285, and threonine 325.

Belongs to the ferredoxin--NADP reductase type 2 family. Homodimer. Requires FAD as cofactor.

It carries out the reaction 2 reduced [2Fe-2S]-[ferredoxin] + NADP(+) + H(+) = 2 oxidized [2Fe-2S]-[ferredoxin] + NADPH. The chain is Ferredoxin--NADP reductase from Lactiplantibacillus plantarum (strain ATCC BAA-793 / NCIMB 8826 / WCFS1) (Lactobacillus plantarum).